A 107-amino-acid chain; its full sequence is Transcription initiation factor IIA subunit 2-2 (107 aa).

The protein belongs to the TFIIA subunit 2 family. TFIIA is a heterodimer of the large unprocessed subunit 1 and a small subunit gamma. It was originally believed to be a heterotrimer of an alpha (p30), a beta (p20) and a gamma (p14) subunit.

It localises to the nucleus. In terms of biological role, TFIIA is a component of the transcription machinery of RNA polymerase II and plays an important role in transcriptional activation. TFIIA in a complex with TBP mediates transcriptional activity. The chain is Transcription initiation factor IIA subunit 2-2 (TfIIA-S-2) from Drosophila melanogaster (Fruit fly).